The sequence spans 300 residues: MTEVALSLDVSRFLRYLGVERQLSPITLQNYQRQLDAIIALAGETGLKSWQQCDAAIVRSFAVRSRRKGLGPASLALRLSALRSFFDWLVSQGELKANPAKGVSAPKAPRHLPKNIDVDDVNRLLDIDLNDPLAVRDRAMLEVMYGAGLRLSELVGLDIKHLDLDTGEVWVMGKGSKERRLPIGRNAVTWIEHWLDLRGLFASDEEALFLSKLGKRISARNVQKRFAEWGIKQGLNSHVHPHKLRHSFATHMLESSGDLRGVQELLGHANLSTTQIYTHLDFQHLASVYDAAHPRAKRGK.

The Core-binding (CB) domain maps to 4-90 (VALSLDVSRF…ALRSFFDWLV (87 aa)). Positions 111 to 290 (HLPKNIDVDD…DFQHLASVYD (180 aa)) constitute a Tyr recombinase domain. Residues arginine 150, lysine 174, histidine 242, arginine 245, and histidine 268 contribute to the active site. Residue tyrosine 277 is the O-(3'-phospho-DNA)-tyrosine intermediate of the active site.

The protein belongs to the 'phage' integrase family. XerC subfamily. Forms a cyclic heterotetrameric complex composed of two molecules of XerC and two molecules of XerD, in which XerC interacts with XerD via its C-terminal region, XerD interacts with XerC via its C-terminal region and so on.

The protein resides in the cytoplasm. With respect to regulation, ftsK may regulate the catalytic switch between XerC and XerD in the heterotetrameric complex during the two steps of the recombination process. In terms of biological role, site-specific tyrosine recombinase, which acts by catalyzing the cutting and rejoining of the recombining DNA molecules. Binds cooperatively to specific DNA consensus sequences that are separated from XerD binding sites by a short central region, forming the heterotetrameric XerC-XerD complex that recombines DNA substrates. The complex is essential to convert dimers of the bacterial chromosome into monomers to permit their segregation at cell division. It also contributes to the segregational stability of plasmids. In the complex XerC specifically exchanges the top DNA strands. The sequence is that of Tyrosine recombinase XerC from Salmonella typhi.